Consider the following 313-residue polypeptide: Ribosomal RNA small subunit methyltransferase H (313 aa).

S-adenosyl-L-methionine contacts are provided by residues Gly-36–His-38, Asp-56, Phe-80, Asp-102, and Gln-109.

This sequence belongs to the methyltransferase superfamily. RsmH family.

The protein localises to the cytoplasm. The catalysed reaction is cytidine(1402) in 16S rRNA + S-adenosyl-L-methionine = N(4)-methylcytidine(1402) in 16S rRNA + S-adenosyl-L-homocysteine + H(+). Its function is as follows. Specifically methylates the N4 position of cytidine in position 1402 (C1402) of 16S rRNA. The sequence is that of Ribosomal RNA small subunit methyltransferase H from Haemophilus ducreyi (strain 35000HP / ATCC 700724).